Reading from the N-terminus, the 404-residue chain is Multidrug resistance protein MdtH (404 aa).

Residues 1–12 lie on the Cytoplasmic side of the membrane; sequence MSRVSQARNLGK. A helical membrane pass occupies residues 13-33; sequence YFLLIDNMLVVLGFFVVFPLI. The Periplasmic portion of the chain corresponds to 34–98; the sequence is SIRFVDQMGW…GFATMGIAHE (65 aa). Residues 99 to 116 traverse the membrane as a helical segment; it reads PWLLWFSCFLSGLGGTLF. The Cytoplasmic segment spans residues 117 to 138; that stretch reads DPPRSALVVKLIRPEQRGRFFS. A helical transmembrane segment spans residues 139–159; sequence LLMMQDSAGAVIGALLGSWLL. The Periplasmic portion of the chain corresponds to 160–164; it reads QYDFR. A helical transmembrane segment spans residues 165-185; it reads LVCAMGAILFIVCAIFNAWLL. The Cytoplasmic segment spans residues 186–213; that stretch reads PAWKLSTVRTPVREGMRRVISDKRFVTY. The helical transmembrane segment at 214 to 234 threads the bilayer; the sequence is VLTLAGYYMLAVQVMLMLPIM. The Periplasmic portion of the chain corresponds to 235–243; sequence VNDVAGSPA. The helical transmembrane segment at 244 to 264 threads the bilayer; that stretch reads AVKWMYAIEACLSLTLLYPIA. Residues 265–276 lie on the Cytoplasmic side of the membrane; the sequence is RWSEKRFRLEHR. Residues 277 to 297 traverse the membrane as a helical segment; sequence LMAGLLIMSLSMIPIGLAGNL. Topologically, residues 298–299 are periplasmic; it reads QQ. A helical membrane pass occupies residues 300 to 320; it reads LFTLICAFYIGSVIAEPARET. The Cytoplasmic portion of the chain corresponds to 321 to 339; it reads LSASLTDARARGSYMGFSR. Residues 340–360 traverse the membrane as a helical segment; that stretch reads LGLAIGGAIGYIGGGWLFDMG. The Periplasmic segment spans residues 361 to 367; that stretch reads KTLAQPE. A helical transmembrane segment spans residues 368-388; that stretch reads LPWMMLGIIGFITFLALGWQF. Over 389–404 the chain is Cytoplasmic; it reads SHKRTPRQYTGARRLI.

It belongs to the major facilitator superfamily. DHA1 family. MdtH (TC 2.A.1.2.21) subfamily.

It is found in the cell inner membrane. This chain is Multidrug resistance protein MdtH, found in Salmonella arizonae (strain ATCC BAA-731 / CDC346-86 / RSK2980).